The primary structure comprises 419 residues: tRNA (guanine-N(7)-)-methyltransferase non-catalytic subunit wuho (419 aa).

Over residues 51-61 (STAEQQSAAAE) the composition is skewed to low complexity. A disordered region spans residues 51 to 75 (STAEQQSAAAETGGGSVVEGEEPKD). WD repeat units follow at residues 87 to 127 (APTV…AQLV), 174 to 213 (GHLS…DIHS), and 217 to 255 (GHKE…ELLR).

Belongs to the WD repeat TRM82 family. As to quaternary structure, forms a heterodimer with the catalytic subunit Mettl1. Interacts with mei-P26 and weakly interacts with bgcn; required for the function or formation of the mei-P26-bgcn-bam-sxl complex. Interacts with nanos; may be involved in mei-P26-dependent derepression of the BMP signaling pathway. Interacts with Myc; the interaction may be mediated by mei-P26 and may be involved in the regulation of ribosome biogenesis. As to expression, in testis, it is present at high level in hub cells, a niche for germline stem cells of testis. Ubiquitously expressed in all testicular cells throughout spermatogenesis. Ubiquitously expressed in all germline and somatic cells of the ovary.

The protein localises to the nucleus. Its subcellular location is the cytoplasm. The protein operates within tRNA modification; N(7)-methylguanine-tRNA biosynthesis. Functionally, required for the Mettl1-dependent formation of N(7)-methylguanine at position 46 (m7G46) in tRNA. In the Mettl1-wuho methyltransferase complex, it is required to stabilize and induce conformational changes of the catalytic subunit. Required for binding of nanos mRNA and repression of translation by the mei-P26-bgcn-bam-sxl complex. May cooperate with mei-P26 and nanos to derepress the BMP signaling pathway. May cooperate with mei-P26 to suppress expression of a subset of microRNAs. May cooperate with mei-P26 to regulate bam expression levels in germline cells during gametogenesis. Required to promote mitosis to meiosis transition during gametogenesis. May regulate germline cell division in part by regulating ribosome biogenesis. This Drosophila willistoni (Fruit fly) protein is tRNA (guanine-N(7)-)-methyltransferase non-catalytic subunit wuho.